The chain runs to 189 residues: Segregation and condensation protein B (189 aa).

Belongs to the ScpB family. In terms of assembly, homodimer. Homodimerization may be required to stabilize the binding of ScpA to the Smc head domains. Component of a cohesin-like complex composed of ScpA, ScpB and the Smc homodimer, in which ScpA and ScpB bind to the head domain of Smc. The presence of the three proteins is required for the association of the complex with DNA.

The protein localises to the cytoplasm. Functionally, participates in chromosomal partition during cell division. May act via the formation of a condensin-like complex containing Smc and ScpA that pull DNA away from mid-cell into both cell halves. This Clostridium tetani (strain Massachusetts / E88) protein is Segregation and condensation protein B.